The sequence spans 248 residues: tRNA (guanine-N(1)-)-methyltransferase (248 aa).

S-adenosyl-L-methionine contacts are provided by residues G116 and I135–L140.

Belongs to the RNA methyltransferase TrmD family. Homodimer.

The protein resides in the cytoplasm. The enzyme catalyses guanosine(37) in tRNA + S-adenosyl-L-methionine = N(1)-methylguanosine(37) in tRNA + S-adenosyl-L-homocysteine + H(+). In terms of biological role, specifically methylates guanosine-37 in various tRNAs. The protein is tRNA (guanine-N(1)-)-methyltransferase of Anaeromyxobacter sp. (strain Fw109-5).